The primary structure comprises 72 residues: Disintegrin cereberin (72 aa).

A Disintegrin domain is found at 1–72 (EAGEECDCGS…SADCPRNRFH (72 aa)). 6 disulfide bridges follow: Cys6–Cys21, Cys8–Cys16, Cys15–Cys38, Cys29–Cys35, Cys34–Cys59, and Cys47–Cys66. The short motif at 51–53 (RGD) is the Cell attachment site element. Residues 51-72 (RGDNPDDRCTGQSADCPRNRFH) are disordered.

This sequence belongs to the venom metalloproteinase (M12B) family. P-II subfamily. P-IIa sub-subfamily. Monomer (disintegrin). Expressed by the venom gland.

It localises to the secreted. Its function is as follows. Inhibits fibrinogen interaction with platelet. Acts by binding to alpha-IIb/beta-3 (ITGA2B/ITGB3) on the platelet surface and inhibits aggregation induced by ADP, thrombin, platelet-activating factor and collagen. The polypeptide is Disintegrin cereberin (Crotalus cerberus (Arizona black rattlesnake)).